We begin with the raw amino-acid sequence, 363 residues long: Molybdenum import ATP-binding protein ModC (363 aa).

The ABC transporter domain maps to 1 to 230; sequence MISARFSGRQ…PNLPLIHRPD (230 aa). 31–38 contacts ATP; sequence GPSGCGKT. One can recognise a Mop domain in the interval 289–359; that stretch reads DTTILNALPA…LKAMALSAPA (71 aa).

The protein belongs to the ABC transporter superfamily. Molybdate importer (TC 3.A.1.8) family. In terms of assembly, the complex is composed of two ATP-binding proteins (ModC), two transmembrane proteins (ModB) and a solute-binding protein (ModA).

The protein localises to the cell inner membrane. It carries out the reaction molybdate(out) + ATP + H2O = molybdate(in) + ADP + phosphate + H(+). Functionally, part of the ABC transporter complex ModABC involved in molybdenum import. Responsible for energy coupling to the transport system. The sequence is that of Molybdenum import ATP-binding protein ModC from Rhodobacter capsulatus (Rhodopseudomonas capsulata).